Consider the following 1927-residue polypeptide: Integrin beta-like protein A (1927 aa).

A signal peptide spans 1 to 20 (MNRILTLFILFISLFIVCEA). At 21–1860 (THFRFGTMSW…KENNNKTVLT (1840 aa)) the chain is on the extracellular side. A glycan (N-linked (GlcNAc...) asparagine) is linked at Asn309. An EGF-like domain is found at 425 to 462 (YGEKCDPVDPCVNGESNEGSQGNGKCTCYYGWEGKNCD). 2 disulfides stabilise this stretch: Cys435-Cys450 and Cys452-Cys461. The 188-residue stretch at 522-709 (EVLVLVDSQP…VLSKAVVKAI (188 aa)) folds into the VWFA domain. N-linked (GlcNAc...) asparagine glycosylation is found at Asn1122, Asn1516, Asn1717, Asn1723, and Asn1855. A helical membrane pass occupies residues 1861-1881 (GAIAGAAAGAGLLAAGAWFLL). Over 1882 to 1927 (KKSAPPTDAFFGEGAFADGAVSTNPMYEESGRSAINPLYEASSENL) the chain is Cytoplasmic.

The protein belongs to the SIB family. Interacts with talA/talin.

The protein localises to the membrane. In terms of biological role, implicated in cellular adhesion to substrate or phagocytic particles. This Dictyostelium discoideum (Social amoeba) protein is Integrin beta-like protein A (sibA).